We begin with the raw amino-acid sequence, 269 residues long: Protein NETWORKED 3A (269 aa).

Residues 6–87 (SKWWWIGNHN…ERYDLLRPSS (82 aa)) form the NAB domain. The tract at residues 87-113 (SVHKHGSDSESHEKSSTCDESSWSEAC) is disordered. Residues 91–103 (HGSDSESHEKSST) show a composition bias toward basic and acidic residues. Residues 155-214 (NGNSEMMKIEIERLREENKVYSEMVREKDEEKREAIRQMSVAIQMLKEENSELKKRVTNT) adopt a coiled-coil conformation.

Belongs to the NET family.

Its subcellular location is the cytoplasm. It is found in the cytoskeleton. The protein localises to the nucleus membrane. Plant-specific actin binding protein. May be part of a membrane-cytoskeletal adapter complex. The sequence is that of Protein NETWORKED 3A from Arabidopsis thaliana (Mouse-ear cress).